The sequence spans 496 residues: MSSHTSTPNHASAAPPRKWYDMTSAEFYVYVVAFMCGISMLMPINAVFSAPSYMLQYYLYATKDPNHVPQMTNFWSNVMTYYNLIGLVTGLVMEPLTLLKSFRKIPMLVRLLGGLCILIVEIIVLMAVPARGTTEGGAVATMCIAGFIGGLGKSIFESTVYGMFGAFPPSFTSIMMGGVGISGVLTSLIQIIVKAALPDTYEGVKKQSYIYYSLDVGIQAATFIALIMMRFNSFAQLHFGDLGGVKSKVDAGSLAGAGENVREPGAEATELEQYTEPAIGQIQEKNAEAHKDDPLVDREHSDDVDEHGDALRAVEGPTSNEILRATSIISVLRSIKWMFVSCAFVFVVTLFLFPGIATGMFPESKWFATVAVFIFNCCDVLGRVAPALRFMWPRSYNQRWIIVAASFARVIFVPLLLLYSYHYIPSEAYGYVIMVIFGFSSGYVASMSLTLGPQSKGIDNDGKRFVAGTLMGISILVGGTIGTVLSIMTQTIREKY.

Residues 1–26 (MSSHTSTPNHASAAPPRKWYDMTSAE) are Cytoplasmic-facing. Residues 27 to 47 (FYVYVVAFMCGISMLMPINAV) form a helical membrane-spanning segment. The Extracellular portion of the chain corresponds to 48-77 (FSAPSYMLQYYLYATKDPNHVPQMTNFWSN). Residues 78–98 (VMTYYNLIGLVTGLVMEPLTL) traverse the membrane as a helical segment. The Cytoplasmic portion of the chain corresponds to 99-107 (LKSFRKIPM). A helical membrane pass occupies residues 108–128 (LVRLLGGLCILIVEIIVLMAV). Residues 129-135 (PARGTTE) are Extracellular-facing. Residues 136–156 (GGAVATMCIAGFIGGLGKSIF) traverse the membrane as a helical segment. The Cytoplasmic portion of the chain corresponds to 157-172 (ESTVYGMFGAFPPSFT). Residues 173 to 193 (SIMMGGVGISGVLTSLIQIIV) traverse the membrane as a helical segment. Residues 194–208 (KAALPDTYEGVKKQS) lie on the Extracellular side of the membrane. The chain crosses the membrane as a helical span at residues 209–229 (YIYYSLDVGIQAATFIALIMM). Topologically, residues 230 to 336 (RFNSFAQLHF…SIISVLRSIK (107 aa)) are cytoplasmic. Residues 337 to 357 (WMFVSCAFVFVVTLFLFPGIA) form a helical membrane-spanning segment. At 358-365 (TGMFPESK) the chain is on the extracellular side. A helical transmembrane segment spans residues 366-386 (WFATVAVFIFNCCDVLGRVAP). Residues 387 to 399 (ALRFMWPRSYNQR) are Cytoplasmic-facing. The helical transmembrane segment at 400 to 420 (WIIVAASFARVIFVPLLLLYS) threads the bilayer. Residues 421–431 (YHYIPSEAYGY) are Extracellular-facing. The chain crosses the membrane as a helical span at residues 432–452 (VIMVIFGFSSGYVASMSLTLG). At 453–464 (PQSKGIDNDGKR) the chain is on the cytoplasmic side. The helical transmembrane segment at 465-485 (FVAGTLMGISILVGGTIGTVL) threads the bilayer. At 486–496 (SIMTQTIREKY) the chain is on the extracellular side.

The protein belongs to the SLC29A/ENT transporter (TC 2.A.57) family.

It is found in the membrane. It catalyses the reaction adenosine(in) = adenosine(out). Functionally, adenosine transporter. This chain is Adenosine transporter 1, found in Crithidia fasciculata.